The chain runs to 156 residues: Transcriptional regulator MraZ (156 aa).

SpoVT-AbrB domains lie at 7-54 (NIEV…PESV) and 84-127 (VEVV…AKER).

The protein belongs to the MraZ family. Forms oligomers.

The protein resides in the cytoplasm. Its subcellular location is the nucleoid. This chain is Transcriptional regulator MraZ, found in Bacteroides thetaiotaomicron (strain ATCC 29148 / DSM 2079 / JCM 5827 / CCUG 10774 / NCTC 10582 / VPI-5482 / E50).